We begin with the raw amino-acid sequence, 65 residues long: Large ribosomal subunit protein bL35 (65 aa).

The segment at 1-26 (MPKMKTHRGAAKRFRKTGTGKLKRGK) is disordered.

This sequence belongs to the bacterial ribosomal protein bL35 family.

This chain is Large ribosomal subunit protein bL35, found in Clostridium beijerinckii (strain ATCC 51743 / NCIMB 8052) (Clostridium acetobutylicum).